We begin with the raw amino-acid sequence, 75 residues long: Protein RegB (75 aa).

In terms of biological role, required for optimal exotoxin A production. This is Protein RegB (regB) from Pseudomonas aeruginosa (strain ATCC 15692 / DSM 22644 / CIP 104116 / JCM 14847 / LMG 12228 / 1C / PRS 101 / PAO1).